A 100-amino-acid chain; its full sequence is Small ribosomal subunit protein uS14c (100 aa).

This sequence belongs to the universal ribosomal protein uS14 family. In terms of assembly, part of the 30S ribosomal subunit.

Its subcellular location is the plastid. It localises to the chloroplast. Binds 16S rRNA, required for the assembly of 30S particles. This chain is Small ribosomal subunit protein uS14c, found in Cicer arietinum (Chickpea).